The sequence spans 937 residues: Protein translocase subunit SecA (937 aa).

Residues Q86, 104–108 (GEGKT), and D493 contribute to the ATP site. A disordered region spans residues 868–889 (LERPSQPTKLAYSAPSEDGDAE). Zn(2+)-binding residues include C911, C913, C922, and H923. The segment at 915–937 (SGKKFKQCHGRPGGPTGLTARVS) is disordered.

It belongs to the SecA family. As to quaternary structure, monomer and homodimer. Part of the essential Sec protein translocation apparatus which comprises SecA, SecYEG and auxiliary proteins SecDF. Other proteins may also be involved. Zn(2+) serves as cofactor.

It localises to the cell membrane. It is found in the cytoplasm. It catalyses the reaction ATP + H2O + cellular proteinSide 1 = ADP + phosphate + cellular proteinSide 2.. In terms of biological role, part of the Sec protein translocase complex. Interacts with the SecYEG preprotein conducting channel. Has a central role in coupling the hydrolysis of ATP to the transfer of proteins into and across the cell membrane, serving as an ATP-driven molecular motor driving the stepwise translocation of polypeptide chains across the membrane. This chain is Protein translocase subunit SecA, found in Nocardioides sp. (strain ATCC BAA-499 / JS614).